Reading from the N-terminus, the 388-residue chain is MTDTSFIESEERQALRKAVASWVANYGHEYYLDKARKHEHTSELWAEAGKLGFLGVNLPEEYGGGGAGMYELSLVMEEMAAAGSALLLMVVSPAINGTIIAKFGTDDQKKRWLPGIADGSLTMAFAITEPDAGSNSHKITTTARRDGSDWIIKGQKVFISGIDQAQAVLVVGRSEEAKTGKLRPALFVVPTDAPGFSYTPIEMELVSPERQFQVFLDDVRLPADALVGAEDAAIAHLFAGLNPERIMGAASAVGMGRFALGRAVDYVKTRKVWSTPIGAHQGLAHPLAQCHIEVELAKLMTQKAATLYDHGDDFGAAEAANMAKYAAAEASSRAVDQAVQSMGGNGLTKEYGVAAMMTSARLARIAPISREMVLNFVAQTSLGLPRSY.

This sequence belongs to the acyl-CoA dehydrogenase family. The cofactor is FAD.

It catalyses the reaction a 2,3-saturated acyl-CoA + A = a 2,3-dehydroacyl-CoA + AH2. The sequence is that of Acyl-CoA dehydrogenase fadE12 (fadE12) from Mycobacterium bovis (strain ATCC BAA-935 / AF2122/97).